The chain runs to 630 residues: MSHTETHAFQTEVNQLLKLMIHALYSNKEIFLRELVSNASDALDKLRFESVSNDALSEGESELAIQVGFDKEARTVSIIDNGIGMTRDEVIANIGTIANSGTKKFLENMTGDQAKDSHLIGQFGVGFYASFIVADKVTLTTRKAGDDKSEGTRWESAGEGEYTLETVEKETKGTEITLHLKEDMDEFLDDFRLKSIITTYSDHINFPIKMWQVKLDEEGKETEEKSLEQVNKATAIWTQPKSELSDEDYNNFYQTISHDYENPLAHIHNKVEGTLEYTSLLYLPKKAPFDLYDRDRRYGLKLYVKRVFIMDDAEHLMPTYLRFVRGVIDSNDLPLNVSREILQSNRVVDKIRSASVKRVLDQLAKMAKAEDQSDYETFWDQFGNVMKEGVIEDFANKDKIAKLLRFSSTHESSGPTQRVSLQDYIDRMGEGQEAIYYITADTYAAATGSPHLEMFRKKGIEVLLLTDRIDEWLVSHLTEFEGKQLKSVTSADLKEFDEEADKELSEEDKKAREALTEKVKKAIEDQVSDVKITHRLTDSPACVVSAEGDISAHMARMMEQMGQAMPKQKPVLELNPDHALVKKLDSLEDEPKVKEWSLFLLEQAQLAEGDQLEKPADFIKRMNALLSEVI.

The interval 1–339 is a; substrate-binding; that stretch reads MSHTETHAFQ…SNDLPLNVSR (339 aa). The b stretch occupies residues 340–556; that stretch reads EILQSNRVVD…EGDISAHMAR (217 aa). Residues 557 to 630 form a c region; the sequence is MMEQMGQAMP…RMNALLSEVI (74 aa).

Belongs to the heat shock protein 90 family. In terms of assembly, homodimer.

The protein localises to the cytoplasm. In terms of biological role, molecular chaperone. Has ATPase activity. The protein is Chaperone protein HtpG of Hydrogenovibrio crunogenus (strain DSM 25203 / XCL-2) (Thiomicrospira crunogena).